We begin with the raw amino-acid sequence, 158 residues long: Transcription elongation factor GreA (158 aa).

A coiled-coil region spans residues 10 to 76 (TLEGKKKLEE…QIEKMIRNAE (67 aa)).

The protein belongs to the GreA/GreB family.

Necessary for efficient RNA polymerase transcription elongation past template-encoded arresting sites. The arresting sites in DNA have the property of trapping a certain fraction of elongating RNA polymerases that pass through, resulting in locked ternary complexes. Cleavage of the nascent transcript by cleavage factors such as GreA or GreB allows the resumption of elongation from the new 3'terminus. GreA releases sequences of 2 to 3 nucleotides. In Halalkalibacterium halodurans (strain ATCC BAA-125 / DSM 18197 / FERM 7344 / JCM 9153 / C-125) (Bacillus halodurans), this protein is Transcription elongation factor GreA.